The sequence spans 342 residues: L-lysine 2,3-aminomutase (342 aa).

Residues 106-329 (HKYQNRALLL…PRLAREIGGE (224 aa)) enclose the Radical SAM core domain. Positions 120, 124, and 127 each coordinate [4Fe-4S] cluster. An N6-(pyridoxal phosphate)lysine modification is found at Lys332.

Belongs to the radical SAM superfamily. KamA family. [4Fe-4S] cluster serves as cofactor. The cofactor is pyridoxal 5'-phosphate.

The enzyme catalyses L-lysine = D-beta-lysine. Functionally, with EpmA is involved in the beta-lysylation step of the post-translational modification of translation elongation factor P (EF-P) on 'Lys-34'. EpmB appears to act before EpmA. Displays lysine 2,3-aminomutase activity, producing (R)-beta-lysine from (S)-alpha-lysine (L-lysine). The chain is L-lysine 2,3-aminomutase (epmB) from Salmonella typhimurium (strain LT2 / SGSC1412 / ATCC 700720).